A 375-amino-acid chain; its full sequence is Ubl carboxyl-terminal hydrolase 18 (375 aa).

A disordered region spans residues Glu-18–Pro-45. A compositionally biased stretch (basic and acidic residues) spans Leu-26–Pro-45. The USP domain occupies Val-55 to Met-373. Cys-64 functions as the Nucleophile in the catalytic mechanism. His-321 serves as the catalytic Proton acceptor.

The protein belongs to the peptidase C19 family. Interacts with STAT2; the interaction is direct. Interacts with IFNAR2; indirectly via STAT2, it negatively regulates the assembly of the ternary interferon-IFNAR1-IFNAR2 complex and inhibits type I interferon signaling. Interacts with STING1. Interacts with USP20.

The catalysed reaction is Thiol-dependent hydrolysis of ester, thioester, amide, peptide and isopeptide bonds formed by the C-terminal Gly of ubiquitin (a 76-residue protein attached to proteins as an intracellular targeting signal).. In terms of biological role, interferon-induced ISG15-specific protease that plays a crucial role for maintaining a proper balance of ISG15-conjugated proteins in cells. Regulates protein ISGylation by efficiently cleaving ISG15 conjugates linked via isopeptide bonds. Regulates T-cell activation and T-helper 17 (Th17) cell differentiation by deubiquitinating TAK1, likely to keep TAK1-TAB complexes in steady conditions. In turn, restricts activation of NF-kappa-B, NFAT, and JNK as well as expression of IL2 in T-cells after TCR activation. Acts as a molecular adapter with USP20 to promote innate antiviral response through deubiquitinating STING1. Involved also in the negative regulation of the inflammatory response triggered by type I interferon. Upon recruitment by STAT2 to the type I interferon receptor subunit IFNAR2 interferes with the assembly of the ternary interferon-IFNAR1-IFNAR2 complex and acts as a negative regulator of the type I interferon signaling pathway. The polypeptide is Ubl carboxyl-terminal hydrolase 18 (USP18) (Pongo abelii (Sumatran orangutan)).